Consider the following 159-residue polypeptide: Ribosomal RNA large subunit methyltransferase H (159 aa).

S-adenosyl-L-methionine contacts are provided by residues L76, G108, and 127–132 (FSKMTF).

This sequence belongs to the RNA methyltransferase RlmH family. Homodimer.

The protein localises to the cytoplasm. The enzyme catalyses pseudouridine(1915) in 23S rRNA + S-adenosyl-L-methionine = N(3)-methylpseudouridine(1915) in 23S rRNA + S-adenosyl-L-homocysteine + H(+). Its function is as follows. Specifically methylates the pseudouridine at position 1915 (m3Psi1915) in 23S rRNA. This chain is Ribosomal RNA large subunit methyltransferase H, found in Clostridium novyi (strain NT).